A 146-amino-acid chain; its full sequence is Actin-depolymerizing factor 6 (146 aa).

At Ser13 the chain carries Phosphoserine. One can recognise an ADF-H domain in the interval 14-146 (GMGVADESKT…DLEVLRERAN (133 aa)).

Belongs to the actin-binding proteins ADF family. Post-translationally, phosphorylated. In terms of tissue distribution, expressed in vascular tissues of all organs.

The protein localises to the cytoplasm. It is found in the cytoskeleton. Its function is as follows. Actin-depolymerizing protein. Severs actin filaments (F-actin) and binds to actin monomers. The polypeptide is Actin-depolymerizing factor 6 (ADF6) (Arabidopsis thaliana (Mouse-ear cress)).